The chain runs to 192 residues: Pyridoxal 5'-phosphate synthase subunit PdxT (192 aa).

Residue 46 to 48 (GES) coordinates L-glutamine. Catalysis depends on Cys-77, which acts as the Nucleophile. Residues Arg-103 and 131-132 (IR) contribute to the L-glutamine site. Residues His-167 and Glu-169 each act as charge relay system in the active site.

It belongs to the glutaminase PdxT/SNO family. As to quaternary structure, in the presence of PdxS, forms a dodecamer of heterodimers. Only shows activity in the heterodimer.

It catalyses the reaction aldehydo-D-ribose 5-phosphate + D-glyceraldehyde 3-phosphate + L-glutamine = pyridoxal 5'-phosphate + L-glutamate + phosphate + 3 H2O + H(+). It carries out the reaction L-glutamine + H2O = L-glutamate + NH4(+). It functions in the pathway cofactor biosynthesis; pyridoxal 5'-phosphate biosynthesis. In terms of biological role, catalyzes the hydrolysis of glutamine to glutamate and ammonia as part of the biosynthesis of pyridoxal 5'-phosphate. The resulting ammonia molecule is channeled to the active site of PdxS. This Exiguobacterium sibiricum (strain DSM 17290 / CCUG 55495 / CIP 109462 / JCM 13490 / 255-15) protein is Pyridoxal 5'-phosphate synthase subunit PdxT.